Reading from the N-terminus, the 757-residue chain is MTENSAVEVDEGVFESTAVIDNGSFGTRTIRFETGRLAQQAAGAVVAYLDDETMLLSATSASKHPKEHFDFFPLTVDVEERMYAAGRIPGSFFRREGRPSTDAILTCRLIDRPLRPSFVDGLRNEIQVVVTVMSLNPQDLYDVVAINAASASTQIAGLPFSGPVGGVRVALITSDENKAGQWVAFPTVEQLENAVFDMVVAGRIVSGSGDDADVAIMMVEAEATDNVISLIDGGAQAPTEAIVAEGLEAAKPFIARLCTAQQQLAAKASKPTGDFPVFPAYQDDVFAAVEAAAAEKLSAALTIAGKQERDDKTDEVKVEVLEQVAPNFEGREKELGAAFRSLTKKLVRQRILRDQFRIDGRGITDIRSLSAEVAIVPRAHGSALFERGETQILGVTTLDMVKMAQQVDSLGPETTKRYMHHYNFPPYSTGETGRVGSPKRREIGHGALAERALMPVLPSVEEFPYAIRQVSEALSSNGSTSMGSVCASTLALLNAGVPLKAPVAGIAMGLVSDQVDGETRYVALTDILGAEDAFGDMDFKVAGTKDFVTALQLDTKLDGIPSKVLAGALSQAKDARATILEVMAEAIDTPDEMSPFAPRVTAIKVPVDKIGEVIGPKGKMINSITEQTGANISIEDDGTVFVGATDGPSAQAAIDMINAIANPQLPKVGERFLGTVVKTTAFGAFVSLLPGRDGLVHISKLGSGKRIAKVEDVVSVGSKLRVEIADIDNRGKISLIPVEEDGAAAPAEQSEEAAAEK.

Positions 532 and 538 each coordinate Mg(2+). The 60-residue stretch at 598–657 (PRVTAIKVPVDKIGEVIGPKGKMINSITEQTGANISIEDDGTVFVGATDGPSAQAAIDMI) folds into the KH domain. The S1 motif domain occupies 669–738 (GERFLGTVVK…NRGKISLIPV (70 aa)).

It belongs to the polyribonucleotide nucleotidyltransferase family. Mg(2+) serves as cofactor.

It localises to the cytoplasm. It carries out the reaction RNA(n+1) + phosphate = RNA(n) + a ribonucleoside 5'-diphosphate. Involved in mRNA degradation. Catalyzes the phosphorolysis of single-stranded polyribonucleotides processively in the 3'- to 5'-direction. The polypeptide is Polyribonucleotide nucleotidyltransferase (Rhodococcus jostii (strain RHA1)).